Consider the following 241-residue polypeptide: 1-(5-phosphoribosyl)-5-[(5-phosphoribosylamino)methylideneamino] imidazole-4-carboxamide isomerase (241 aa).

Asp-8 (proton acceptor) is an active-site residue. Asp-130 acts as the Proton donor in catalysis.

It belongs to the HisA/HisF family.

It is found in the cytoplasm. It carries out the reaction 1-(5-phospho-beta-D-ribosyl)-5-[(5-phospho-beta-D-ribosylamino)methylideneamino]imidazole-4-carboxamide = 5-[(5-phospho-1-deoxy-D-ribulos-1-ylimino)methylamino]-1-(5-phospho-beta-D-ribosyl)imidazole-4-carboxamide. The protein operates within amino-acid biosynthesis; L-histidine biosynthesis; L-histidine from 5-phospho-alpha-D-ribose 1-diphosphate: step 4/9. This Francisella philomiragia subsp. philomiragia (strain ATCC 25017 / CCUG 19701 / FSC 153 / O#319-036) protein is 1-(5-phosphoribosyl)-5-[(5-phosphoribosylamino)methylideneamino] imidazole-4-carboxamide isomerase.